A 280-amino-acid chain; its full sequence is Elongation factor Ts (280 aa).

The involved in Mg(2+) ion dislocation from EF-Tu stretch occupies residues 79–82 (TDFV).

The protein belongs to the EF-Ts family.

It localises to the cytoplasm. In terms of biological role, associates with the EF-Tu.GDP complex and induces the exchange of GDP to GTP. It remains bound to the aminoacyl-tRNA.EF-Tu.GTP complex up to the GTP hydrolysis stage on the ribosome. This chain is Elongation factor Ts, found in Vibrio cholerae serotype O1 (strain ATCC 39541 / Classical Ogawa 395 / O395).